The chain runs to 486 residues: Cysteine--tRNA ligase (486 aa).

Residue cysteine 29 coordinates Zn(2+). A 'HIGH' region motif is present at residues 31-41 (VTVYDYCHLGH). Zn(2+) contacts are provided by cysteine 214, histidine 239, and glutamate 243. Positions 271-275 (KMSKS) match the 'KMSKS' region motif. Position 274 (lysine 274) interacts with ATP.

It belongs to the class-I aminoacyl-tRNA synthetase family. In terms of assembly, monomer. Zn(2+) is required as a cofactor.

The protein localises to the cytoplasm. It carries out the reaction tRNA(Cys) + L-cysteine + ATP = L-cysteinyl-tRNA(Cys) + AMP + diphosphate. This is Cysteine--tRNA ligase from Nostoc sp. (strain PCC 7120 / SAG 25.82 / UTEX 2576).